The primary structure comprises 350 residues: 2,5-dihydroxypyridine 5,6-dioxygenase (350 aa).

Residues His-265, His-318, and Asp-320 each coordinate Fe cation.

Requires Fe(2+) as cofactor.

The catalysed reaction is 2,5-dihydroxypyridine + O2 = N-formylmaleamate + H(+). It participates in cofactor degradation; nicotinate degradation. Its function is as follows. Catalyzes the dioxygenolytic ring cleavage of 2,5-dihydroxypyridine between carbons 5 and 6 generating N-formylmaleamate in the aerobic nicotinate degradation pathway. This Pseudomonas putida (strain ATCC 47054 / DSM 6125 / CFBP 8728 / NCIMB 11950 / KT2440) protein is 2,5-dihydroxypyridine 5,6-dioxygenase (nicX).